Consider the following 428-residue polypeptide: Histidinol dehydrogenase (428 aa).

Residues tyrosine 125, glutamine 187, and asparagine 210 each contribute to the NAD(+) site. Residues serine 234, glutamine 256, and histidine 259 each coordinate substrate. Residues glutamine 256 and histidine 259 each coordinate Zn(2+). Residues glutamate 323 and histidine 324 each act as proton acceptor in the active site. Substrate-binding residues include histidine 324, aspartate 357, glutamate 411, and histidine 416. Residue aspartate 357 participates in Zn(2+) binding. Histidine 416 contacts Zn(2+).

This sequence belongs to the histidinol dehydrogenase family. Zn(2+) serves as cofactor.

The enzyme catalyses L-histidinol + 2 NAD(+) + H2O = L-histidine + 2 NADH + 3 H(+). It participates in amino-acid biosynthesis; L-histidine biosynthesis; L-histidine from 5-phospho-alpha-D-ribose 1-diphosphate: step 9/9. Catalyzes the sequential NAD-dependent oxidations of L-histidinol to L-histidinaldehyde and then to L-histidine. The protein is Histidinol dehydrogenase of Bacteroides thetaiotaomicron (strain ATCC 29148 / DSM 2079 / JCM 5827 / CCUG 10774 / NCTC 10582 / VPI-5482 / E50).